We begin with the raw amino-acid sequence, 155 residues long: Peptide deformylase (155 aa).

Fe cation-binding residues include C88 and H130. E131 is a catalytic residue. H134 serves as a coordination point for Fe cation.

This sequence belongs to the polypeptide deformylase family. Requires Fe(2+) as cofactor.

The enzyme catalyses N-terminal N-formyl-L-methionyl-[peptide] + H2O = N-terminal L-methionyl-[peptide] + formate. Functionally, removes the formyl group from the N-terminal Met of newly synthesized proteins. Requires at least a dipeptide for an efficient rate of reaction. N-terminal L-methionine is a prerequisite for activity but the enzyme has broad specificity at other positions. The polypeptide is Peptide deformylase (Pelotomaculum thermopropionicum (strain DSM 13744 / JCM 10971 / SI)).